The sequence spans 1997 residues: Autophagy-related protein 2 homolog A (1997 aa).

The Chorein N-terminal domain occupies 17–119 (CRYLLQHYLG…RGAAQGTESQ (103 aa)). Disordered stretches follow at residues 241 to 281 (TSVQ…IQQI), 1292 to 1323 (HCPPKPEPPTEIAGQKLQPPEGPSSLPPCLPA), 1371 to 1414 (EEIK…TDTD), 1492 to 1534 (SSRP…TQGG), and 1684 to 1718 (RLDGPAKSSSDCELEQETSQGSTEDETMSPSSSTD). Residues 1311–1321 (PEGPSSLPPCL) are compositionally biased toward pro residues. Polar residues-rich tracts occupy residues 1393-1408 (RVSQESLGLSDTSGDS), 1493-1532 (SRPNSARAQSPRSRTSFHNARGSPSRSSVTNRPQNTWRTQ), and 1690-1718 (KSSSDCELEQETSQGSTEDETMSPSSSTD).

Belongs to the ATG2 family.

The protein localises to the preautophagosomal structure membrane. It localises to the lipid droplet. It is found in the endoplasmic reticulum membrane. It carries out the reaction a 1,2-diacyl-sn-glycero-3-phospho-L-serine(in) = a 1,2-diacyl-sn-glycero-3-phospho-L-serine(out). It catalyses the reaction a 1,2-diacyl-sn-glycero-3-phosphoethanolamine(in) = a 1,2-diacyl-sn-glycero-3-phosphoethanolamine(out). Its function is as follows. Lipid transfer protein involved in autophagosome assembly. Tethers the edge of the isolation membrane (IM) to the endoplasmic reticulum (ER) and mediates direct lipid transfer from ER to IM for IM expansion. Binds to the ER exit site (ERES), which is the membrane source for autophagosome formation, and extracts phospholipids from the membrane source and transfers them to atg9 (atg9a or atg9b) to the IM for membrane expansion. Also regulates lipid droplets morphology and distribution within the cell. The sequence is that of Autophagy-related protein 2 homolog A from Xenopus tropicalis (Western clawed frog).